The primary structure comprises 745 residues: Myeloperoxidase (745 aa).

Positions 1–48 are cleaved as a signal peptide; it reads MGVPFFSSLRCMVDLGPCWAGGLTAEMKLLLALAGLLAILATPQPSEG. The N-linked (GlcNAc...) asparagine glycan is linked to N139. C167 and C180 are joined by a disulfide. D260 contacts heme b. H261 serves as the catalytic Proton acceptor. D262 serves as a coordination point for Ca(2+). 2 cysteine pairs are disulfide-bonded: C281–C291 and C285–C309. The residue at position 316 (C316) is a Cysteine sulfenic acid (-SOH). N-linked (GlcNAc...) asparagine glycosylation is present at N323. Residues T334, F336, D338, and S340 each coordinate Ca(2+). 2 N-linked (GlcNAc...) asparagine glycosylation sites follow: N355 and N391. Residues C387 and C398 are joined by a disulfide bond. Positions 408 and 409 each coordinate heme b. An N-linked (GlcNAc...) asparagine glycan is attached at N483. H502 provides a ligand contact to heme b. Cystine bridges form between C606–C663 and C704–C730. N729 carries an N-linked (GlcNAc...) asparagine glycan.

The protein belongs to the peroxidase family. XPO subfamily. Homodimer; disulfide-linked. Each monomer consists of a light and a heavy chain. Found in a complex with CP and LTF; interacts directly with CP, which protects CP antioxidant properties by MPO. It depends on Ca(2+) as a cofactor. Requires heme b as cofactor.

It localises to the lysosome. It catalyses the reaction chloride + H2O2 + H(+) = hypochlorous acid + H2O. Part of the host defense system of polymorphonuclear leukocytes. It is responsible for microbicidal activity against a wide range of organisms. In the stimulated PMN, MPO catalyzes the production of hypohalous acids, primarily hypochlorous acid in physiologic situations, and other toxic intermediates that greatly enhance PMN microbicidal activity. Mediates the proteolytic cleavage of alpha-1-microglobulin to form t-alpha-1-microglobulin, which potently inhibits oxidation of low-density lipoprotein particles and limits vascular damage. In Homo sapiens (Human), this protein is Myeloperoxidase.